A 266-amino-acid polypeptide reads, in one-letter code: NAD kinase 1 (266 aa).

Asp-45 serves as the catalytic Proton acceptor. NAD(+) is bound by residues 45–46 (DG), 122–123 (NE), and Arg-148. Residue Asp-150 coordinates ATP. NAD(+)-binding positions include Ser-158 and 161-166 (TAYNKA).

This sequence belongs to the NAD kinase family. Homodimer. It depends on Ca(2+) as a cofactor. Mn(2+) is required as a cofactor.

The protein resides in the cytoplasm. The enzyme catalyses NAD(+) + ATP = ADP + NADP(+) + H(+). With respect to regulation, allosterically inhibited by NADP and activated by quinolinic acid. Strongly inhibited by HgCl(2). In terms of biological role, involved in the regulation of the intracellular balance of NAD and NADP, and is a key enzyme in the biosynthesis of NADP. Catalyzes specifically the phosphorylation on 2'-hydroxyl of the adenosine moiety of NAD to yield NADP. It can use ATP and other nucleoside triphosphates (GTP, UTP) as well as inorganic polyphosphate (poly(P)) as a source of phosphorus. This is NAD kinase 1 (ppnKA) from Bacillus subtilis (strain 168).